The chain runs to 259 residues: Indole-3-glycerol phosphate synthase (259 aa).

The protein belongs to the TrpC family.

It catalyses the reaction 1-(2-carboxyphenylamino)-1-deoxy-D-ribulose 5-phosphate + H(+) = (1S,2R)-1-C-(indol-3-yl)glycerol 3-phosphate + CO2 + H2O. Its pathway is amino-acid biosynthesis; L-tryptophan biosynthesis; L-tryptophan from chorismate: step 4/5. This Dehalococcoides mccartyi (strain ATCC BAA-2100 / JCM 16839 / KCTC 5957 / BAV1) protein is Indole-3-glycerol phosphate synthase.